The primary structure comprises 326 residues: Regulation of nuclear pre-mRNA domain-containing protein 1B (326 aa).

Serine 2 carries the N-acetylserine modification. A CID domain is found at 2–133 (SSFSESALEK…QLKLSMEDSK (132 aa)). The segment at 127 to 149 (LSMEDSKSPPPKATEEKKSLKRT) is disordered. A compositionally biased stretch (basic and acidic residues) spans 128 to 144 (SMEDSKSPPPKATEEKK). Phosphoserine occurs at positions 132 and 134. Tyrosine 161 carries the post-translational modification Phosphotyrosine. Phosphoserine is present on residues serine 166 and serine 299.

The protein belongs to the UPF0400 (RTT103) family. As to quaternary structure, homodimer. May form a heterodimer with RPRD1A. Associates with RPAP2. Associates with the RNA polymerase II complex. In terms of tissue distribution, preferentially expressed in a range of tumor tissues including colon, lung, liver, breast, prostate, stomach, uterine endometrium and cervical cancers with higher levels in tumors than in adjacent non-tumor tissue (at protein level).

It is found in the nucleus. Functionally, interacts with phosphorylated C-terminal heptapeptide repeat domain (CTD) of the largest RNA polymerase II subunit POLR2A, and participates in dephosphorylation of the CTD by RPAP2. Transcriptional regulator which enhances expression of CCND1. Promotes binding of RNA polymerase II to the CCDN1 promoter and to the termination region before the poly-A site but decreases its binding after the poly-A site. Prevents RNA polymerase II from reading through the 3' end termination site and may allow it to be recruited back to the promoter through promotion of the formation of a chromatin loop. Also enhances the transcription of a number of other cell cycle-related genes including CDK2, CDK4, CDK6 and cyclin-E but not CDKN1A, CDKN1B or cyclin-A. Promotes cell proliferation. This is Regulation of nuclear pre-mRNA domain-containing protein 1B (RPRD1B) from Homo sapiens (Human).